We begin with the raw amino-acid sequence, 162 residues long: Allophycocyanin beta chain (162 aa).

At asparagine 72 the chain carries N4-methylasparagine. Residue cysteine 82 participates in (2R,3E)-phycocyanobilin binding.

It belongs to the phycobiliprotein family. In terms of assembly, heterodimer of an alpha and a beta chain. Contains one covalently linked phycocyanobilin chromophore.

The protein resides in the cellular thylakoid membrane. Its function is as follows. Light-harvesting photosynthetic bile pigment-protein from the phycobiliprotein complex. Allophycocyanin has a maximum absorption at approximately 650 nanometers. The polypeptide is Allophycocyanin beta chain (Microchaete diplosiphon (Fremyella diplosiphon)).